A 247-amino-acid chain; its full sequence is Probable transcriptional regulatory protein YPO2055/y2255/YP_1898 (247 aa).

It belongs to the TACO1 family.

Its subcellular location is the cytoplasm. The chain is Probable transcriptional regulatory protein YPO2055/y2255/YP_1898 from Yersinia pestis.